We begin with the raw amino-acid sequence, 187 residues long: UPF0301 protein YqgE (187 aa).

It belongs to the UPF0301 (AlgH) family.

The polypeptide is UPF0301 protein YqgE (Shigella boydii serotype 4 (strain Sb227)).